Here is a 475-residue protein sequence, read N- to C-terminus: MIMTPPRKLHIKSYGCQMNVYDAQRMVDTLAPEGFVETADPAEADLVILNTCHIREKASEKVFSELGRLRVIKEEAARTGREMKIAVAGCVAQAEGAEITRRASTVDVVVGPQSYHNLPKLLAKARDGAPAIETEFPIEDKFSALPAPKPAAIRARGVSAFVTVQEGCDKFCTFCVVPYTRGMEVSRPVADIVADAKRLAENGVRELTLIGQNVNAYHGDDENGRTSSLGRLLHRLAMLPGIARLRYSTSHPRDVDDSLIEAHRDIPAVMPFVHLPVQSGSDRILAAMNRKHTAADYIRTIERFRKVRPEIAFSSDFIVGFPGESEQDFADTLALVTQIGYAGAYSFKYSPRPGTPAADMQETDTALAVPAAVMDERLAQLQALIDAQQASFNRAAIGRTVEVLFERAAREPGQIVGRTAYLQPAHVMASPDIIGKVLPVTIDSLERYSLKGRLASEETAVASLRSTQRESETFA.

The MTTase N-terminal domain maps to 7 to 127; sequence RKLHIKSYGC…LPKLLAKARD (121 aa). [4Fe-4S] cluster contacts are provided by C16, C52, C90, C168, C172, and C175. One can recognise a Radical SAM core domain in the interval 154–388; it reads RARGVSAFVT…AQLQALIDAQ (235 aa). The TRAM domain maps to 394-456; that stretch reads RAAIGRTVEV…RYSLKGRLAS (63 aa).

It belongs to the methylthiotransferase family. MiaB subfamily. As to quaternary structure, monomer. Requires [4Fe-4S] cluster as cofactor.

It is found in the cytoplasm. The catalysed reaction is N(6)-dimethylallyladenosine(37) in tRNA + (sulfur carrier)-SH + AH2 + 2 S-adenosyl-L-methionine = 2-methylsulfanyl-N(6)-dimethylallyladenosine(37) in tRNA + (sulfur carrier)-H + 5'-deoxyadenosine + L-methionine + A + S-adenosyl-L-homocysteine + 2 H(+). In terms of biological role, catalyzes the methylthiolation of N6-(dimethylallyl)adenosine (i(6)A), leading to the formation of 2-methylthio-N6-(dimethylallyl)adenosine (ms(2)i(6)A) at position 37 in tRNAs that read codons beginning with uridine. In Afipia carboxidovorans (strain ATCC 49405 / DSM 1227 / KCTC 32145 / OM5) (Oligotropha carboxidovorans), this protein is tRNA-2-methylthio-N(6)-dimethylallyladenosine synthase.